The sequence spans 379 residues: RIB43A-like with coiled-coils protein 1 (379 aa).

The tract at residues 1–21 (MYNINQSTDTKEAAAIEARRN) is disordered. Over residues 9 to 21 (DTKEAAAIEARRN) the composition is skewed to basic and acidic residues. Coiled coils occupy residues 85 to 111 (ADRTRRLAKKVQEFREQKQQLKNGREF), 161 to 241 (RYNL…KANL), and 280 to 304 (EQRAAIRKEQEVQRSKKEAHRQAEK).

Belongs to the RIB43A family. As to quaternary structure, microtubule inner protein component of sperm flagellar doublet microtubules.

Its subcellular location is the cytoplasm. It is found in the cytoskeleton. It localises to the flagellum axoneme. In Macaca fascicularis (Crab-eating macaque), this protein is RIB43A-like with coiled-coils protein 1 (RIBC1).